A 161-amino-acid polypeptide reads, in one-letter code: Nucleotide-binding protein PputW619_0959 (161 aa).

This sequence belongs to the YajQ family.

Functionally, nucleotide-binding protein. This Pseudomonas putida (strain W619) protein is Nucleotide-binding protein PputW619_0959.